Here is a 128-residue protein sequence, read N- to C-terminus: Holin-like protein CidA (128 aa).

Helical transmembrane passes span 4-24 (LLLT…INWV), 26-46 (ALLH…FTLL), 59-79 (GAAW…VGVI), and 88-108 (FGVS…VSTG).

It belongs to the CidA/LrgA family. CidA subfamily.

It is found in the cell membrane. Increases the activity of extracellular murein hydrolases possibly by mediating their export via hole formation. Inhibited by the antiholin-like proteins LrgAB. In an unstressed cell, the LrgAB products probably inhibit the function of the CidA protein. When a cell is stressed by the addition of antibiotics or by other factors in the environment, CidA possibly oligomerizes within the bacterial cell membrane, creating lesions that disrupt the proton motive force, which in turn results in loss of cell viability. These lesions are also hypothesized to regulate the subsequent cell lysis by either allowing the murein hydrolases access to the cell wall substrate and/or regulating their activity by a possible change in the cell wall pH that results from loss of membrane potential. The sequence is that of Holin-like protein CidA from Bacillus subtilis (strain 168).